The primary structure comprises 279 residues: uncharacterized protein (279 aa).

A Reverse transcriptase domain is found at 1 to 87; that stretch reads MRVNGRNLTN…DEYIYLGRQI (87 aa).

This is an uncharacterized protein from Caenorhabditis elegans.